Reading from the N-terminus, the 488-residue chain is Probable aldehyde dehydrogenase (488 aa).

240 to 245 (GSSVTG) lines the NAD(+) pocket. Catalysis depends on residues E262 and C296.

Belongs to the aldehyde dehydrogenase family.

It catalyses the reaction an aldehyde + NAD(+) + H2O = a carboxylate + NADH + 2 H(+). In terms of biological role, involved in an alpha-terpineol oxidation system. The polypeptide is Probable aldehyde dehydrogenase (terPE) (Pseudomonas sp).